A 472-amino-acid polypeptide reads, in one-letter code: ATP synthase subunit beta (472 aa).

157 to 164 (GGAGVGKT) is an ATP binding site.

The protein belongs to the ATPase alpha/beta chains family. In terms of assembly, F-type ATPases have 2 components, CF(1) - the catalytic core - and CF(0) - the membrane proton channel. CF(1) has five subunits: alpha(3), beta(3), gamma(1), delta(1), epsilon(1). CF(0) has three main subunits: a(1), b(2) and c(9-12). The alpha and beta chains form an alternating ring which encloses part of the gamma chain. CF(1) is attached to CF(0) by a central stalk formed by the gamma and epsilon chains, while a peripheral stalk is formed by the delta and b chains.

It localises to the cell inner membrane. It carries out the reaction ATP + H2O + 4 H(+)(in) = ADP + phosphate + 5 H(+)(out). Its function is as follows. Produces ATP from ADP in the presence of a proton gradient across the membrane. The catalytic sites are hosted primarily by the beta subunits. The protein is ATP synthase subunit beta of Desulfatibacillum aliphaticivorans.